A 341-amino-acid chain; its full sequence is tRNA N6-adenosine threonylcarbamoyltransferase (341 aa).

Positions 111 and 115 each coordinate Fe cation. Substrate is bound by residues 134 to 138 (LVSGG), D167, G180, and N276. D304 is a Fe cation binding site.

The protein belongs to the KAE1 / TsaD family. It depends on Fe(2+) as a cofactor.

The protein resides in the cytoplasm. The catalysed reaction is L-threonylcarbamoyladenylate + adenosine(37) in tRNA = N(6)-L-threonylcarbamoyladenosine(37) in tRNA + AMP + H(+). Required for the formation of a threonylcarbamoyl group on adenosine at position 37 (t(6)A37) in tRNAs that read codons beginning with adenine. Is involved in the transfer of the threonylcarbamoyl moiety of threonylcarbamoyl-AMP (TC-AMP) to the N6 group of A37, together with TsaE and TsaB. TsaD likely plays a direct catalytic role in this reaction. The sequence is that of tRNA N6-adenosine threonylcarbamoyltransferase from Stutzerimonas stutzeri (strain A1501) (Pseudomonas stutzeri).